The chain runs to 438 residues: MDYQTIPSQGLSGEICVPGDKSISHRAVLLAAIAEGQTQVDGFLMGADNLAMVSALQQMGASIQVIEDENILVVEGVGMTGLQAPSEALDCGNSGTAIRLLSGLLAGQPFNTVLTGDSSLQRRPMKRIIDPLTLMGAKIDSTGNVPPLKIYGNPRLTGIHYQLPMASAQVKSCLLLAGLYARGKTCITEPAPSRDHTERLLKHFHYTLQKDKQSICVSGGGKLKANDISIPGDISSAAFFIVAATITPGSAIRLCRVGVNPTRLGVINLLKMMGADIEVTHYTEKNEEPTADITVRHARLKGIDIPPDQVPLTIDEFPVLLIAAAVAQGKTVLRDGAELRVKETDRIAAMVDGLQKLGIAAESLPDGVIIQGGTLEGGEVNSYDDHRIAMAFAVAGTLAKGPVRIRNCDNVKTSFPNFVELANEVGMNVKGVRGRGGF.

3-phosphoshikimate-binding residues include K21, S22, and R26. Residue K21 coordinates phosphoenolpyruvate. Positions 95 and 123 each coordinate phosphoenolpyruvate. The 3-phosphoshikimate site is built by S167, Q169, D315, and K342. Q169 contributes to the phosphoenolpyruvate binding site. Residue D315 is the Proton acceptor of the active site. 2 residues coordinate phosphoenolpyruvate: R346 and R387.

This sequence belongs to the EPSP synthase family. In terms of assembly, monomer.

The protein localises to the cytoplasm. It carries out the reaction 3-phosphoshikimate + phosphoenolpyruvate = 5-O-(1-carboxyvinyl)-3-phosphoshikimate + phosphate. It participates in metabolic intermediate biosynthesis; chorismate biosynthesis; chorismate from D-erythrose 4-phosphate and phosphoenolpyruvate: step 6/7. Catalyzes the transfer of the enolpyruvyl moiety of phosphoenolpyruvate (PEP) to the 5-hydroxyl of shikimate-3-phosphate (S3P) to produce enolpyruvyl shikimate-3-phosphate and inorganic phosphate. This chain is 3-phosphoshikimate 1-carboxyvinyltransferase, found in Coxiella burnetii (strain CbuG_Q212) (Coxiella burnetii (strain Q212)).